A 592-amino-acid polypeptide reads, in one-letter code: Bifunctional enzyme BirA/CoaX (592 aa).

The biotin--protein ligase stretch occupies residues 1 to 329; it reads MTVLKPSHWR…ISLRPDNRSV (329 aa). The BPL/LPL catalytic domain occupies 83–259; sequence QTALKHECAS…ELGAVLEQYA (177 aa). The segment at 336 to 592 is type III pantothenate kinase; that stretch reads DSERFLLLEG…AAEGGESEHA (257 aa). 344–351 serves as a coordination point for ATP; it reads EGGNSRLK. Substrate-binding positions include Y426 and 433–436; that span reads GSDR. D435 (proton acceptor) is an active-site residue. T458 contributes to the ATP binding site. T508 provides a ligand contact to substrate.

This sequence in the N-terminal section; belongs to the biotin--protein ligase family. The protein in the C-terminal section; belongs to the type III pantothenate kinase family. It depends on NH4(+) as a cofactor. K(+) is required as a cofactor.

It is found in the cytoplasm. The catalysed reaction is biotin + L-lysyl-[protein] + ATP = N(6)-biotinyl-L-lysyl-[protein] + AMP + diphosphate + H(+). The enzyme catalyses (R)-pantothenate + ATP = (R)-4'-phosphopantothenate + ADP + H(+). It participates in cofactor biosynthesis; coenzyme A biosynthesis; CoA from (R)-pantothenate: step 1/5. Activates biotin to form biotinyl-5'-adenylate and transfers the biotin moiety to biotin-accepting proteins. In terms of biological role, catalyzes the phosphorylation of pantothenate (Pan), the first step in CoA biosynthesis. The sequence is that of Bifunctional enzyme BirA/CoaX (birA/coaX) from Neisseria gonorrhoeae (strain ATCC 700825 / FA 1090).